Here is a 528-residue protein sequence, read N- to C-terminus: Chaperonin GroEL, chloroplastic (528 aa).

ATP contacts are provided by residues 29-32 (TLGP), 86-90 (DGTTT), glycine 414, and aspartate 496.

Belongs to the chaperonin (HSP60) family. In terms of assembly, forms a cylinder of 14 subunits composed of two heptameric rings stacked back-to-back. Interacts with the co-chaperonin GroES.

The protein localises to the plastid. It localises to the chloroplast. It catalyses the reaction ATP + H2O + a folded polypeptide = ADP + phosphate + an unfolded polypeptide.. Functionally, together with its co-chaperonin GroES, plays an essential role in assisting protein folding. The GroEL-GroES system forms a nano-cage that allows encapsulation of the non-native substrate proteins and provides a physical environment optimized to promote and accelerate protein folding. This Gracilaria tenuistipitata var. liui (Red alga) protein is Chaperonin GroEL, chloroplastic.